Here is a 1380-residue protein sequence, read N- to C-terminus: Receptor-type adenylate cyclase A (1380 aa).

The Cytoplasmic portion of the chain corresponds to 1 to 34; it reads MAMQIRPSLGGCLRHGGAGDHAARRLSRLRAAKV. A helical transmembrane segment spans residues 35-55; sequence FVPTAVVCVLLCCAPWVMAEI. Topologically, residues 56–891 are extracellular; it reads TNDAEREPVY…SHALTPAQRN (836 aa). N-linked (GlcNAc...) asparagine glycans are attached at residues Asn422, Asn478, Asn497, and Asn567. Residues 892–912 form a helical membrane-spanning segment; it reads GLIAGCVVGAVVLIATCTLLL. Topologically, residues 913-1380 are cytoplasmic; sequence YCCMDNRNND…NPHYARHAFE (468 aa). The Guanylate cyclase domain maps to 933 to 1087; that stretch reads TLLFTDIESS…DTSNMAARTE (155 aa). The Mg(2+) site is built by Asp938 and Asp981. The segment at 1270 to 1298 is disordered; the sequence is LAREGDSAAGGVRPRLPGSPVTSLPAGGS.

Belongs to the adenylyl cyclase class-3 family. Mg(2+) is required as a cofactor.

The protein resides in the membrane. The enzyme catalyses ATP = 3',5'-cyclic AMP + diphosphate. Its function is as follows. Could act as a receptor for an unknown ligand. This is Receptor-type adenylate cyclase A (RAC-A) from Leishmania donovani.